The primary structure comprises 337 residues: P2Y purinoceptor 14 (337 aa).

The Extracellular segment spans residues 1 to 28 (MNATSVPPAEGSCPSNALITKQIIPMLY). Asn2 carries N-linked (GlcNAc...) asparagine glycosylation. A helical membrane pass occupies residues 29–49 (FVVFVAGILLNGMSGWVFFYV). Residues 50–54 (PSSKS) are Cytoplasmic-facing. A helical membrane pass occupies residues 55-75 (FIVYLKNIVIADFLMSLTFPF). The Extracellular portion of the chain corresponds to 76-95 (KILGDLGLGLWQVKVFVCRV). Residues Cys93 and Cys171 are joined by a disulfide bond. Residues 96 to 116 (SAVLFYINMYVSIVFFGLIGF) traverse the membrane as a helical segment. Residues 117–138 (DRYYKIVKPLLTSFIQSISYSK) lie on the Cytoplasmic side of the membrane. A helical membrane pass occupies residues 139 to 159 (LLSVLVWSLTLLIALPNMILT). The Extracellular portion of the chain corresponds to 160–187 (NRNVTEATRVKCMDLKSDLGLKWHKASS). An N-linked (GlcNAc...) asparagine glycan is attached at Asn162. The helical transmembrane segment at 188–208 (YIFVGIFWIVFLSLIIFYTAI) threads the bilayer. The Cytoplasmic portion of the chain corresponds to 209–233 (TKKIFKSHFKSRKNSVSVKKKSSRN). A helical transmembrane segment spans residues 234–254 (IFSIMFVFFICFVPYHIARIP). The Extracellular portion of the chain corresponds to 255–277 (YTQSQTEAHYSCQSKQILFYVKE). A helical membrane pass occupies residues 278 to 298 (FSLLLSAANVCLDPIIYFFLC). Over 299–337 (QPFREVLCKKLHIQLKTQHDSETSKIKRENIIQESTDTL) the chain is Cytoplasmic.

This sequence belongs to the G-protein coupled receptor 1 family.

It is found in the cell membrane. Its function is as follows. Receptor for UDP-glucose and other UDP-sugar coupled to G-proteins. Not activated by ATP, ADP, UTP or ATP. This is P2Y purinoceptor 14 (P2RY14) from Bos taurus (Bovine).